We begin with the raw amino-acid sequence, 630 residues long: Probable potassium transport system protein Kup 1 (630 aa).

The next 12 helical transmembrane spans lie at 15 to 35, 58 to 78, 104 to 124, 142 to 162, 173 to 193, 208 to 228, 252 to 272, 290 to 310, 342 to 362, 368 to 388, 399 to 419, and 424 to 444; these read LLAM…TSPL, LISL…VLFL, TAIL…DAMI, PALS…LFAV, FFGP…FMHI, AVAF…AVFL, WFTV…AFVL, ALLP…QAVI, IYLP…VFIF, LATA…VLAF, AWWA…FLGA, and IHDG…IMWT.

Belongs to the HAK/KUP transporter (TC 2.A.72) family.

The protein resides in the cell inner membrane. The catalysed reaction is K(+)(in) + H(+)(in) = K(+)(out) + H(+)(out). In terms of biological role, transport of potassium into the cell. Likely operates as a K(+):H(+) symporter. The chain is Probable potassium transport system protein Kup 1 from Sinorhizobium medicae (strain WSM419) (Ensifer medicae).